The chain runs to 342 residues: Prostasin (342 aa).

Positions 1 to 29 (MAPRVGLGLGQLEAVTILLLLGLLQSGIR) are cleaved as a signal peptide. The propeptide at 30–32 (ADG) is activation peptide. 2 disulfide bridges follow: C37-C154 and C70-C86. A Peptidase S1 domain is found at 45 to 286 (ITGGGSAKPG…YASWIHHHVA (242 aa)). Residue H85 is the Charge relay system of the active site. The N-linked (GlcNAc...) asparagine glycan is linked to N110. D134 functions as the Charge relay system in the catalytic mechanism. N159 carries N-linked (GlcNAc...) asparagine glycosylation. 3 disulfide bridges follow: C168-C244, C201-C223, and C234-C262. S238 acts as the Charge relay system in catalysis. Residues 320–340 (LLRPVLFLPLGLTLGLLSLWL) traverse the membrane as a helical segment. Residues 323–342 (PVLFLPLGLTLGLLSLWLEH) constitute a propeptide that is removed on maturation.

It belongs to the peptidase S1 family. As to quaternary structure, heterodimer of two chains, light and heavy, held by a disulfide bond.

It localises to the cell membrane. It is found in the secreted. The protein localises to the extracellular space. Possesses a trypsin-like cleavage specificity with a preference for poly-basic substrates. Stimulates epithelial sodium channel (ENaC) activity through activating cleavage of the gamma subunits (SCNN1G). This is Prostasin (Prss8) from Mus musculus (Mouse).